We begin with the raw amino-acid sequence, 204 residues long: GTP cyclohydrolase 1 (204 aa).

Cys92, His95, and Cys165 together coordinate Zn(2+).

Belongs to the GTP cyclohydrolase I family. As to quaternary structure, homomer.

The catalysed reaction is GTP + H2O = 7,8-dihydroneopterin 3'-triphosphate + formate + H(+). Its pathway is cofactor biosynthesis; 7,8-dihydroneopterin triphosphate biosynthesis; 7,8-dihydroneopterin triphosphate from GTP: step 1/1. The protein is GTP cyclohydrolase 1 of Mycobacterium avium (strain 104).